The following is a 1666-amino-acid chain: Atrochrysone carboxylic acid synthase PKS4 (1666 aa).

A Ketosynthase family 3 (KS3) domain is found at 15 to 452 (FEPIAIVGIG…GNAGFMVIEE (438 aa)). Residues Cys-194, His-332, and His-372 each act as for beta-ketoacyl synthase activity in the active site. A malonyl-CoA:ACP transacylase (MAT) domain region spans residues 555-863 (AFCFSGQGGE…WMTALDALMR (309 aa)). Ser-632 (for acyl/malonyl transferase activity) is an active-site residue. Residues 905–1034 (REVKASSTML…EQDLLESLSL (130 aa)) are N-terminal hotdog fold. The PKS/mFAS DH domain maps to 905–1206 (REVKASSTML…MAKMKIYVLK (302 aa)). The interval 935-1203 (LLNHVMAGYT…DVRMAKMKIY (269 aa)) is product template (PT) domain. Residues 1050 to 1206 (STDVLRKELA…MAKMKIYVLK (157 aa)) are C-terminal hotdog fold. Position 1269 is an O-(pantetheine 4'-phosphoryl)serine (Ser-1269). A Carrier domain is found at 1331-1395 (ATSPSLPIMP…TSTEPSQTLV (65 aa)). The interval 1334–1397 (PSLPIMPNGV…TEPSQTLVAN (64 aa)) is proline-rich linker region. The interval 1444 to 1529 (TVIGIHCPGL…PPGVVGLTAQ (86 aa)) is alpha/beta hydrolase superfamily-type thioesterase (TE) domain.

It carries out the reaction holo-[ACP] + 8 malonyl-CoA + 8 H(+) = atrochrysone carboxyl-[ACP] + 8 CO2 + 8 CoA + 2 H2O. Its pathway is secondary metabolite biosynthesis. Non-reducing polyketide synthase that synthesizes the universal anthraquinone precursor atrochrysone carboxylic acid from malonyl-CoA. Produces a mixture of both 3R and 3S enantiomers with an excess of the 3S form. PKS4 catalyzes both hepta- and octaketide synthesis and also yields 6-hydroxymusizin, probably via carboxylating activity inherent to the KS domain. This Calonarius odorifer (Mushroom) protein is Atrochrysone carboxylic acid synthase PKS4.